A 162-amino-acid chain; its full sequence is MAILDINEIRAILPHRYPFLLVDRILEMETDRIVGIKNVTFNEPQFTGHFPDFPVMPGVMIVEAMAQTAGVLVLHSMPDRANKLVLLVAIENARFRKPVVPGDTLRMEMKIIKRKASVAKMAGIATVDGVVVAEAEVMCKLADKEEKPPAAPEIKVPAEAAV.

The active site involves histidine 49.

It belongs to the thioester dehydratase family. FabZ subfamily.

It localises to the cytoplasm. It catalyses the reaction a (3R)-hydroxyacyl-[ACP] = a (2E)-enoyl-[ACP] + H2O. Involved in unsaturated fatty acids biosynthesis. Catalyzes the dehydration of short chain beta-hydroxyacyl-ACPs and long chain saturated and unsaturated beta-hydroxyacyl-ACPs. The chain is 3-hydroxyacyl-[acyl-carrier-protein] dehydratase FabZ from Solibacter usitatus (strain Ellin6076).